Here is a 428-residue protein sequence, read N- to C-terminus: MTATITDINAHEILDSRANPTLEVRVTLSSQAYGCAAVPSGASTGEREAVELRDNNLERYGGKGVLQAVENVNGPIRDALLGQDPRSQEEIDRIMIELDGTENKANLGANAILGVSLAVAYAAANNADLPLYRYLGGDGGPFSMPVPMMNIINGGAHATNNLDFQEFMIVPVGAPTFAEALRYGAEVFHALKKRLVSRGLMSAVGDEGGFAPDLPNNEAAFELILEAIEDANYVPGKDIYLALDAASSELYQNGRYDFENNQLTSEEMIDRLTEWTKKYPVISIEDGLSENDWAGWKLLTERLENKVQLVGDDIFVTNPDILEKGIKKNIANAILVKLNQIGTLTETLATVGLAKSNKYGVIISHRSGETEDTTIADLAVATDARQIKTGSLCRSDRVAKYNRLLQIERELNDQAPYAGKEAFLFNRK.

Q165 contributes to the (2R)-2-phosphoglycerate binding site. Catalysis depends on E207, which acts as the Proton donor. Mg(2+)-binding residues include D244, E285, and D312. (2R)-2-phosphoglycerate contacts are provided by K337, R366, S367, and K388. K337 (proton acceptor) is an active-site residue.

Belongs to the enolase family. In terms of assembly, component of the RNA degradosome, a multiprotein complex involved in RNA processing and mRNA degradation. Requires Mg(2+) as cofactor.

It localises to the cytoplasm. The protein resides in the secreted. It is found in the cell surface. The catalysed reaction is (2R)-2-phosphoglycerate = phosphoenolpyruvate + H2O. It functions in the pathway carbohydrate degradation; glycolysis; pyruvate from D-glyceraldehyde 3-phosphate: step 4/5. Catalyzes the reversible conversion of 2-phosphoglycerate (2-PG) into phosphoenolpyruvate (PEP). It is essential for the degradation of carbohydrates via glycolysis. The sequence is that of Enolase from Coxiella burnetii (strain Dugway 5J108-111).